The primary structure comprises 289 residues: ATP synthase gamma chain (289 aa).

Belongs to the ATPase gamma chain family. As to quaternary structure, F-type ATPases have 2 components, CF(1) - the catalytic core - and CF(0) - the membrane proton channel. CF(1) has five subunits: alpha(3), beta(3), gamma(1), delta(1), epsilon(1). CF(0) has three main subunits: a, b and c.

It is found in the cell membrane. Functionally, produces ATP from ADP in the presence of a proton gradient across the membrane. The gamma chain is believed to be important in regulating ATPase activity and the flow of protons through the CF(0) complex. In Lawsonia intracellularis (strain PHE/MN1-00), this protein is ATP synthase gamma chain.